The chain runs to 65 residues: Large ribosomal subunit protein bL35 (65 aa).

The protein belongs to the bacterial ribosomal protein bL35 family.

This Edwardsiella ictaluri (strain 93-146) protein is Large ribosomal subunit protein bL35.